A 61-amino-acid chain; its full sequence is Photosystem II reaction center protein K (61 aa).

A propeptide spanning residues 1–24 is cleaved from the precursor; it reads MINIVSLVCIYINSVPYSSIFFLD. Residues 36–56 traverse the membrane as a helical segment; it reads IVDIMPVIPLFFFLLAFVWQA.

Belongs to the PsbK family. As to quaternary structure, PSII is composed of 1 copy each of membrane proteins PsbA, PsbB, PsbC, PsbD, PsbE, PsbF, PsbH, PsbI, PsbJ, PsbK, PsbL, PsbM, PsbT, PsbX, PsbY, PsbZ, Psb30/Ycf12, at least 3 peripheral proteins of the oxygen-evolving complex and a large number of cofactors. It forms dimeric complexes.

The protein localises to the plastid. The protein resides in the chloroplast thylakoid membrane. One of the components of the core complex of photosystem II (PSII). PSII is a light-driven water:plastoquinone oxidoreductase that uses light energy to abstract electrons from H(2)O, generating O(2) and a proton gradient subsequently used for ATP formation. It consists of a core antenna complex that captures photons, and an electron transfer chain that converts photonic excitation into a charge separation. This chain is Photosystem II reaction center protein K, found in Lotus japonicus (Lotus corniculatus var. japonicus).